Consider the following 207-residue polypeptide: LexA repressor (207 aa).

The segment at residues 28–48 (RAEISRELGFKSANAAEEHLK) is a DNA-binding region (H-T-H motif). Catalysis depends on for autocatalytic cleavage activity residues serine 123 and lysine 160.

This sequence belongs to the peptidase S24 family. As to quaternary structure, homodimer.

The enzyme catalyses Hydrolysis of Ala-|-Gly bond in repressor LexA.. Represses a number of genes involved in the response to DNA damage (SOS response), including recA and lexA. In the presence of single-stranded DNA, RecA interacts with LexA causing an autocatalytic cleavage which disrupts the DNA-binding part of LexA, leading to derepression of the SOS regulon and eventually DNA repair. In Haemophilus influenzae (strain ATCC 51907 / DSM 11121 / KW20 / Rd), this protein is LexA repressor.